A 208-amino-acid polypeptide reads, in one-letter code: Outer-membrane lipoprotein carrier protein (208 aa).

An N-terminal signal peptide occupies residues 1–21 (MRLIRTLFVAALAMGASLAHA).

This sequence belongs to the LolA family. In terms of assembly, monomer.

The protein resides in the periplasm. Its function is as follows. Participates in the translocation of lipoproteins from the inner membrane to the outer membrane. Only forms a complex with a lipoprotein if the residue after the N-terminal Cys is not an aspartate (The Asp acts as a targeting signal to indicate that the lipoprotein should stay in the inner membrane). The chain is Outer-membrane lipoprotein carrier protein from Pseudomonas aeruginosa (strain UCBPP-PA14).